We begin with the raw amino-acid sequence, 75 residues long: MRTTIDLPQDLHKQALAIARDTHRTLSETVADLMRRGLAANRPTALSSDPRTGLPLVSVGTVVTSEDVRSLEDEQ.

In terms of biological role, possibly the antitoxic component of a type II toxin-antitoxin (TA) system. Its cognate toxin is VapC29 (Potential). This is Putative antitoxin VapB29 (vapB29) from Mycobacterium tuberculosis (strain CDC 1551 / Oshkosh).